The primary structure comprises 274 residues: NH(3)-dependent NAD(+) synthetase (274 aa).

46 to 53 contributes to the ATP binding site; that stretch reads GISGGQDS. Mg(2+) is bound at residue Asp-52. Arg-140 contacts deamido-NAD(+). Thr-160 contributes to the ATP binding site. Glu-165 lines the Mg(2+) pocket. Deamido-NAD(+)-binding residues include Lys-173 and Asp-180. ATP contacts are provided by Lys-189 and Thr-211. Residue 260–261 participates in deamido-NAD(+) binding; the sequence is HK.

Belongs to the NAD synthetase family. In terms of assembly, homodimer.

The enzyme catalyses deamido-NAD(+) + NH4(+) + ATP = AMP + diphosphate + NAD(+) + H(+). It participates in cofactor biosynthesis; NAD(+) biosynthesis; NAD(+) from deamido-NAD(+) (ammonia route): step 1/1. Its function is as follows. Catalyzes the ATP-dependent amidation of deamido-NAD to form NAD. Uses ammonia as a nitrogen source. The polypeptide is NH(3)-dependent NAD(+) synthetase (Rhodococcus erythropolis (strain PR4 / NBRC 100887)).